The sequence spans 133 residues: Large-conductance mechanosensitive channel (133 aa).

A run of 2 helical transmembrane segments spans residues 10-30 and 76-96; these read FAMRGNVVDMAVGVIIGGAFG and GAFIQTVFDFVIIAFAIFLMI.

The protein belongs to the MscL family. Homopentamer.

It localises to the cell inner membrane. In terms of biological role, channel that opens in response to stretch forces in the membrane lipid bilayer. May participate in the regulation of osmotic pressure changes within the cell. This is Large-conductance mechanosensitive channel from Pasteurella multocida (strain Pm70).